The primary structure comprises 52 residues: Large ribosomal subunit protein bL33 (52 aa).

This sequence belongs to the bacterial ribosomal protein bL33 family.

The chain is Large ribosomal subunit protein bL33 (rpmG) from Chlamydia muridarum (strain MoPn / Nigg).